Consider the following 353-residue polypeptide: Probable dual-specificity RNA methyltransferase RlmN (353 aa).

Glu104 serves as the catalytic Proton acceptor. In terms of domain architecture, Radical SAM core spans 112–341 (DGGRKTICIS…ILNRRSPGKD (230 aa)). Residues Cys119 and Cys346 are joined by a disulfide bond. [4Fe-4S] cluster contacts are provided by Cys126, Cys130, and Cys133. Residues 173–174 (GE), Ser205, 228–230 (SLN), and Asn304 each bind S-adenosyl-L-methionine. The S-methylcysteine intermediate role is filled by Cys346.

Belongs to the radical SAM superfamily. RlmN family. It depends on [4Fe-4S] cluster as a cofactor.

It is found in the cytoplasm. It carries out the reaction adenosine(2503) in 23S rRNA + 2 reduced [2Fe-2S]-[ferredoxin] + 2 S-adenosyl-L-methionine = 2-methyladenosine(2503) in 23S rRNA + 5'-deoxyadenosine + L-methionine + 2 oxidized [2Fe-2S]-[ferredoxin] + S-adenosyl-L-homocysteine. The enzyme catalyses adenosine(37) in tRNA + 2 reduced [2Fe-2S]-[ferredoxin] + 2 S-adenosyl-L-methionine = 2-methyladenosine(37) in tRNA + 5'-deoxyadenosine + L-methionine + 2 oxidized [2Fe-2S]-[ferredoxin] + S-adenosyl-L-homocysteine. Specifically methylates position 2 of adenine 2503 in 23S rRNA and position 2 of adenine 37 in tRNAs. The protein is Probable dual-specificity RNA methyltransferase RlmN of Leptospira interrogans serogroup Icterohaemorrhagiae serovar copenhageni (strain Fiocruz L1-130).